Reading from the N-terminus, the 66-residue chain is Large ribosomal subunit protein bL31 (66 aa).

Positions 16, 18, 36, and 39 each coordinate Zn(2+).

It belongs to the bacterial ribosomal protein bL31 family. Type A subfamily. Part of the 50S ribosomal subunit. Requires Zn(2+) as cofactor.

Functionally, binds the 23S rRNA. The polypeptide is Large ribosomal subunit protein bL31 (Campylobacter fetus subsp. fetus (strain 82-40)).